The sequence spans 368 residues: Single-stranded DNA-binding protein 3 (368 aa).

One can recognise a LisH domain in the interval 16 to 48 (AREKLALYVYEYLLHVGAQKSAQTFLSEIRWEK). A disordered region spans residues 100–368 (PVLGNIPPND…NYSPSMTMSV (269 aa)). A compositionally biased stretch (pro residues) spans 126–139 (GSQPSPHAQPPPHN). Composition is skewed to low complexity over residues 174 to 189 (PNMG…PRGM), 211 to 220 (GPGMPGINMG), and 230 to 248 (PSSA…TYVG). The segment covering 252–262 (GGGPPGTPIMP) has biased composition (pro residues). Polar residues predominate over residues 265–276 (ADSTNSSDNIYT). Gly residues predominate over residues 295–305 (GSDGPMGGMGG). A compositionally biased stretch (low complexity) spans 326-337 (NSPNNISGISNP). A compositionally biased stretch (polar residues) spans 353 to 368 (HSFQNDNYSPSMTMSV).

Expressed in embryonic fibroblasts and chondrocytes.

The protein localises to the nucleus. In terms of biological role, may be involved in transcription regulation of the alpha 2(I) collagen gene where it binds to the single-stranded polypyrimidine sequences in the promoter region. The sequence is that of Single-stranded DNA-binding protein 3 (SSBP3) from Gallus gallus (Chicken).